Reading from the N-terminus, the 1337-residue chain is Protein HEG homolog 1 (1337 aa).

The first 31 residues, 1-31, serve as a signal peptide directing secretion; sequence MATPRAPRWPPPSLLLLLLLPLLLLPPAAPG. Low complexity-rich tracts occupy residues 28–40 and 54–66; these read AAPGARGSLPSPA and PGAGHTAPGPGVA. Disordered regions lie at residues 28 to 149, 175 to 211, 235 to 296, 313 to 675, 723 to 767, and 860 to 909; these read AAPG…SNMA, SSLLSLESLPESPSSSRSQRRITPSQTESGTSLGFLE, ASHP…QNPS, VPRT…PSPI, LIPS…TVSL, and EGNR…PQTT. The Extracellular portion of the chain corresponds to 32–1204; the sequence is ARGSLPSPAH…GLNCGNPYQL (1173 aa). Residues 118–131 show a composition bias toward polar residues; the sequence is TAQNARMSHSSSEG. Positions 175–190 are enriched in low complexity; it reads SSLLSLESLPESPSSS. Polar residues-rich tracts occupy residues 195 to 206, 247 to 258, 283 to 296, and 340 to 361; these read RITPSQTESGTS, VLSQKRNSSGQE, IKNGNNFTALQNPS, and GITSMSVRSSPSVKDSRTNSGL. Positions 470–480 are enriched in gly residues; the sequence is RGGGEDSGMGG. Composition is skewed to low complexity over residues 486 to 502 and 556 to 575; these read SSSSSSSTSSSESLDSS and SYSEASESSTSSVKISDSPS. Composition is skewed to polar residues over residues 576–585 and 592–617; these read QAQPKQSSMS and AQSSTESPVLHTSNLPTYTSTVNMPN. Residues 637–675 show a composition bias toward low complexity; the sequence is PSTQPSPSQPQPFSSALPSTRSPGSTSETTTSSPSPSPI. Composition is skewed to polar residues over residues 725–742 and 751–763; these read PSNQTANPKNQSTPQQEK and SLVSPPTDSTKAV. Over residues 868–884 the composition is skewed to low complexity; that stretch reads PTTQPIPLTTSTTSAGE. Positions 885-896 are enriched in basic and acidic residues; sequence RTTELGRAEESS. Over residues 897–909 the composition is skewed to polar residues; the sequence is PSHFLTPSSPQTT. The region spanning 941 to 979 is the EGF-like 1 domain; sequence PVNSCTVNPCLHDGKCIVDLTGRGYRCVCPPAWQGENCS. 6 disulfides stabilise this stretch: Cys-945/Cys-956, Cys-950/Cys-967, Cys-969/Cys-978, Cys-985/Cys-996, Cys-990/Cys-1005, and Cys-1007/Cys-1018. The EGF-like 2; calcium-binding domain maps to 981–1019; that stretch reads DVNECLSSPCPPLATCNNTQGSFTCRCPVGYQLEKGICN. An N-linked (GlcNAc...) asparagine glycan is attached at Asn-1093. Residues 1205–1225 traverse the membrane as a helical segment; sequence ITVVIAAAGGGLLLILGVALI. Residues 1226 to 1337 are Cytoplasmic-facing; sequence VTCCRKSKND…SDESRRRDYF (112 aa). Phosphoserine is present on Ser-1315.

Interacts with CCM2 and KRIT1; KRIT1 markedly facilitates interaction with CCM2.

It localises to the cell membrane. The protein resides in the cell junction. Receptor component of the CCM signaling pathway which is a crucial regulator of heart and vessel formation and integrity. May be acting by stabilizing endothelial cell junctions. In Mus musculus (Mouse), this protein is Protein HEG homolog 1 (Heg1).